The chain runs to 106 residues: Large ribosomal subunit protein bL21 (106 aa).

This sequence belongs to the bacterial ribosomal protein bL21 family. As to quaternary structure, part of the 50S ribosomal subunit. Contacts protein L20.

In terms of biological role, this protein binds to 23S rRNA in the presence of protein L20. The chain is Large ribosomal subunit protein bL21 from Chlamydia pneumoniae (Chlamydophila pneumoniae).